Here is a 614-residue protein sequence, read N- to C-terminus: WD repeat-containing protein 26 (614 aa).

Composition is skewed to low complexity over residues 1–19 (MQAN…AGSG) and 34–44 (SNGVLSSNNGL). Positions 1–65 (MQANGAAAAA…PGGRKKKRLS (65 aa)) are disordered. In terms of domain architecture, LisH spans 67 to 99 (ADEDVIRLIGQHLHGLGLNQTVDLLMQESGCRL). The CTLH domain maps to 100-184 (EHPSATKFRN…EYLEDGKVLE (85 aa)). WD repeat units lie at residues 306–345 (EHCN…HQLK), 352–391 (GHAY…GELR), 397–437 (SHED…DSWE), 477–516 (QEDH…LVRK), 519–561 (GVTQ…PIAE), and 564–604 (GHTR…DNQE).

As to quaternary structure, forms homooligomers. Identified in the CTLH complex that contains at least MAEA, RMND5A (or alternatively its paralog RMND5B), GID8, WDR26, and RANBP9 and/or RANBP10. Interacts with DDB1-CUL4A/B E3 ligase complexes.

The protein resides in the cytoplasm. The protein localises to the nucleus. It localises to the mitochondrion. G-beta-like protein involved in cell signal transduction. Acts as a negative regulator in MAPK signaling pathway. Functions as a scaffolding protein to promote G beta:gamma-mediated PLCB2 plasma membrane translocation and subsequent activation in leukocytes. Core component of the CTLH E3 ubiquitin-protein ligase complex that mediates ubiquitination and subsequent proteasomal degradation of target proteins. Acts as a negative regulator of the canonical Wnt signaling pathway through preventing ubiquitination of beta-catenin CTNNB1 by the beta-catenin destruction complex, thus negatively regulating CTNNB1 degradation. Serves as a scaffold to coordinate PI3K/AKT pathway-driven cell growth and migration. Protects cells from oxidative stress-induced apoptosis via the down-regulation of AP-1 transcriptional activity as well as by inhibiting cytochrome c release from mitochondria. Also protects cells by promoting hypoxia-mediated autophagy and mitophagy. The protein is WD repeat-containing protein 26 (wdr26) of Xenopus tropicalis (Western clawed frog).